Reading from the N-terminus, the 339-residue chain is Tetraacyldisaccharide 4'-kinase (339 aa).

58–65 (TVGGSGKT) contacts ATP.

This sequence belongs to the LpxK family.

It catalyses the reaction a lipid A disaccharide + ATP = a lipid IVA + ADP + H(+). Its pathway is glycolipid biosynthesis; lipid IV(A) biosynthesis; lipid IV(A) from (3R)-3-hydroxytetradecanoyl-[acyl-carrier-protein] and UDP-N-acetyl-alpha-D-glucosamine: step 6/6. Transfers the gamma-phosphate of ATP to the 4'-position of a tetraacyldisaccharide 1-phosphate intermediate (termed DS-1-P) to form tetraacyldisaccharide 1,4'-bis-phosphate (lipid IVA). This Shewanella baltica (strain OS155 / ATCC BAA-1091) protein is Tetraacyldisaccharide 4'-kinase.